Here is a 617-residue protein sequence, read N- to C-terminus: Chaperone protein DnaK (617 aa).

A disordered region spans residues 579–617 (KAQQEAQQASGEAGSADARGPDETVVDADYEVVDDEKRK). Low complexity predominate over residues 580 to 594 (AQQEAQQASGEAGSA). The segment covering 602–617 (TVVDADYEVVDDEKRK) has biased composition (acidic residues).

This sequence belongs to the heat shock protein 70 family.

In terms of biological role, acts as a chaperone. The protein is Chaperone protein DnaK of Methanosarcina acetivorans (strain ATCC 35395 / DSM 2834 / JCM 12185 / C2A).